Here is a 400-residue protein sequence, read N- to C-terminus: Canavanine gamma-lyase (400 aa).

Residue K213 is modified to N6-(pyridoxal phosphate)lysine.

It belongs to the trans-sulfuration enzymes family. Pyridoxal 5'-phosphate serves as cofactor.

It catalyses the reaction L-canavanine + H2O = N-hydroxyguanidine + L-homoserine. Lyase involved in the degradation of canavanine, the delta-oxa-analog of arginine, allowing growth on canavanine as sole nitrogen and carbon source. Catalyzes the elimination of hydroxyguanidine from canavanine with a subsequent water addition to yield homoserine. Is highly specific for canavanine and cannot use methionine, cystathionine or arginine. The chain is Canavanine gamma-lyase from Pseudomonas canavaninivorans.